The primary structure comprises 238 residues: 3-dehydroquinate dehydratase (238 aa).

Residues 35 to 37 (ELR) and arginine 70 each bind 3-dehydroquinate. Histidine 133 functions as the Proton donor/acceptor in the catalytic mechanism. The active-site Schiff-base intermediate with substrate is lysine 160. Positions 202 and 225 each coordinate 3-dehydroquinate.

Belongs to the type-I 3-dehydroquinase family. In terms of assembly, homodimer.

The catalysed reaction is 3-dehydroquinate = 3-dehydroshikimate + H2O. It functions in the pathway metabolic intermediate biosynthesis; chorismate biosynthesis; chorismate from D-erythrose 4-phosphate and phosphoenolpyruvate: step 3/7. Functionally, involved in the third step of the chorismate pathway, which leads to the biosynthesis of aromatic amino acids. Catalyzes the cis-dehydration of 3-dehydroquinate (DHQ) and introduces the first double bond of the aromatic ring to yield 3-dehydroshikimate. The sequence is that of 3-dehydroquinate dehydratase from Staphylococcus aureus (strain bovine RF122 / ET3-1).